Reading from the N-terminus, the 216-residue chain is Peptide methionine sulfoxide reductase MsrA (216 aa).

The active site involves cysteine 54.

It belongs to the MsrA Met sulfoxide reductase family.

The enzyme catalyses L-methionyl-[protein] + [thioredoxin]-disulfide + H2O = L-methionyl-(S)-S-oxide-[protein] + [thioredoxin]-dithiol. It catalyses the reaction [thioredoxin]-disulfide + L-methionine + H2O = L-methionine (S)-S-oxide + [thioredoxin]-dithiol. Its function is as follows. Has an important function as a repair enzyme for proteins that have been inactivated by oxidation. Catalyzes the reversible oxidation-reduction of methionine sulfoxide in proteins to methionine. This Xanthomonas euvesicatoria pv. vesicatoria (strain 85-10) (Xanthomonas campestris pv. vesicatoria) protein is Peptide methionine sulfoxide reductase MsrA.